The chain runs to 391 residues: Chorismate synthase (391 aa).

Residue Arg-48 participates in NADP(+) binding. FMN is bound by residues Arg-126–Ser-128, Gly-286, Lys-301–Ser-305, and Arg-328.

This sequence belongs to the chorismate synthase family. FMNH2 serves as cofactor.

The enzyme catalyses 5-O-(1-carboxyvinyl)-3-phosphoshikimate = chorismate + phosphate. It functions in the pathway metabolic intermediate biosynthesis; chorismate biosynthesis; chorismate from D-erythrose 4-phosphate and phosphoenolpyruvate: step 7/7. Catalyzes the anti-1,4-elimination of the C-3 phosphate and the C-6 proR hydrogen from 5-enolpyruvylshikimate-3-phosphate (EPSP) to yield chorismate, which is the branch point compound that serves as the starting substrate for the three terminal pathways of aromatic amino acid biosynthesis. This reaction introduces a second double bond into the aromatic ring system. The sequence is that of Chorismate synthase from Saccharolobus islandicus (strain Y.N.15.51 / Yellowstone #2) (Sulfolobus islandicus).